The following is a 92-amino-acid chain: UPF0358 protein SH1840 (92 aa).

This sequence belongs to the UPF0358 family.

The chain is UPF0358 protein SH1840 from Staphylococcus haemolyticus (strain JCSC1435).